The sequence spans 202 residues: uncharacterized protein (202 aa).

Positions 1–18 (MKNRLLILSLLVSVPAFA) are cleaved as a signal peptide.

This sequence to E.coli YebB.

This is an uncharacterized protein from Escherichia coli (strain K12).